Reading from the N-terminus, the 640-residue chain is MGTRSSPEEGTPPPLVPECDVEVQPQGHPEESREQEASEVLAEPSSRGGAEQQAEEEEVGEGSSTESSRDAPEATPPIAMAATPPASTSSREGVRGAARRLQGQQLEALTRVALMEQRVKELQRQRKELRIEMEVEVALLRGELAGERVAARREEEQLRELLEQQAASEQRGRQQREQEQRRLSQERDRLEGLRQRLRKAQGQLDSQPEDQRERLLQGVQEMREQLDVAQRAYEDLEFQQLERESRQEEEDRDSPGPQVPDPKVQELQASMAQHRRGALQHRIRVLEEQLKSLGEQMAAESRGLSRKKEEALQALSQERSRLLELNCLQGTPGGDFSEPNPALTKLLFTQKTDRQLLVLQDAVAHSAATPTSSCLFSVHSSLQGSIGLQRTGSLPRKRGERGSQRGSPRPLSFHCTESLEASALPPAVGDSGRYPLYQLLNCGRGNSCGAIHPDIAHMERLLQQAMAERERLLKAREGTRRGTEGSSGPAVPAITAPPTPPHPPGPRILDLRQHLEGWGHNPENCPHVQVSGCCCRGPLVKMGGRIKTWRKRWFCFDRQARRLAYYADKEETKLKGVIYFQAIEEVYYDHLRCAFKSPNPRLTFCVKTYERLFYMVAPSPEAMRIWMDVIVTAADENHAP.

5 disordered regions span residues 1–100 (MGTR…AARR), 162–189 (LEQQAASEQRGRQQREQEQRRLSQERDR), 241–262 (LERESRQEEEDRDSPGPQVPDP), 387–412 (GLQRTGSLPRKRGERGSQRGSPRPLS), and 476–504 (REGTRRGTEGSSGPAVPAITAPPTPPHPP). A compositionally biased stretch (low complexity) spans 76 to 90 (PPIAMAATPPASTSS). Residues 104-327 (QQLEALTRVA…ERSRLLELNC (224 aa)) adopt a coiled-coil conformation. The span at 170-189 (QRGRQQREQEQRRLSQERDR) shows a compositional bias: basic and acidic residues. Residues 454–481 (DIAHMERLLQQAMAERERLLKAREGTRR) are a coiled coil. The segment covering 495–504 (TAPPTPPHPP) has biased composition (pro residues). A PH domain is found at 532 to 635 (GCCCRGPLVK…WMDVIVTAAD (104 aa)).

The protein is Pleckstrin homology-like domain family B member 3 (PHLDB3) of Homo sapiens (Human).